Here is a 488-residue protein sequence, read N- to C-terminus: Calcium uniporter protein, mitochondrial (488 aa).

Residues 1 to 74 constitute a mitochondrion transit peptide; it reads MRALVSRTPI…RSFQLSASSR (74 aa). Positions 65-117 are disordered; the sequence is RSFQLSASSRDKRGPQSAEPDPLERLEVKKVQQQHENEKDDSGRDTKSGGKVA. At 75 to 339 the chain is on the mitochondrial matrix side; that stretch reads DKRGPQSAEP…ECDALAHRGA (265 aa). Residues 86 to 112 are compositionally biased toward basic and acidic residues; that stretch reads PLERLEVKKVQQQHENEKDDSGRDTKS. A helical membrane pass occupies residues 340 to 361; the sequence is QRVALGGFGILAFWWYIVYKLT. At 362–370 the chain is on the mitochondrial intermembrane side; it reads FETDLGWDT. The short motif at 368-376 is the Selectivity filter element; sequence WDTMEPVTY. Residues 371 to 391 form a helical membrane-spanning segment; the sequence is MEPVTYLVSLSTLMGGYLWFL. E372 provides a ligand contact to Ca(2+). The Mitochondrial matrix portion of the chain corresponds to 392-488; that stretch reads YHNREISYRS…ERPKDDRDDD (97 aa). The segment at 464 to 488 is disordered; the sequence is ALKKERRLKNGSQKEERPKDDRDDD. Positions 475–488 are enriched in basic and acidic residues; that stretch reads SQKEERPKDDRDDD.

The protein belongs to the MCU (TC 1.A.77) family. As to quaternary structure, homotetramer, assembles in a dimer or dimers configuration with two interfaces.

It localises to the mitochondrion inner membrane. It carries out the reaction Ca(2+)(in) = Ca(2+)(out). Its activity is regulated as follows. Inhibited by ruthenium red or its derivative Ru360. Its function is as follows. Highly selective calcium channel localized to the inner mitochondrial membrane, which mediates calcium uptake into the mitochondrial matrix. Mitochondrial calcium homeostasis plays key roles in cellular physiology and regulates ATP production, cytoplasmic calcium signals and activation of cell death pathways. Sufficient to operate as a pore-forming channel without the need of calcium-sensor or auxiliary subunit. The chain is Calcium uniporter protein, mitochondrial from Neosartorya fischeri (strain ATCC 1020 / DSM 3700 / CBS 544.65 / FGSC A1164 / JCM 1740 / NRRL 181 / WB 181) (Aspergillus fischerianus).